A 509-amino-acid chain; its full sequence is DEAD-box ATP-dependent RNA helicase CshA (509 aa).

The Q motif signature appears at 2–30 (QNFKELGISDKTVQTLEAMGFKEPTPIQK). The region spanning 33 to 203 (IPYALEGDDI…QQFMKAPKII (171 aa)) is the Helicase ATP-binding domain. 46-53 (AQTGTGKT) contacts ATP. Residues 150 to 153 (DEAD) carry the DEAD box motif. One can recognise a Helicase C-terminal domain in the interval 214–375 (QIDEYYTIVK…LRPPHRKEVL (162 aa)). Basic residues-rich tracts occupy residues 440–459 (ARKN…KRGN) and 467–482 (RRSK…KKNQ). The disordered stretch occupies residues 440–509 (ARKNRSSKGG…KGRTFADHQK (70 aa)). Residues 483–492 (KKFDRRDKQQ) show a composition bias toward basic and acidic residues.

This sequence belongs to the DEAD box helicase family. CshA subfamily. In terms of assembly, oligomerizes, may be a member of the RNA degradosome.

It is found in the cytoplasm. The enzyme catalyses ATP + H2O = ADP + phosphate + H(+). DEAD-box RNA helicase possibly involved in RNA degradation. Unwinds dsRNA in both 5'- and 3'-directions, has RNA-dependent ATPase activity. This Staphylococcus epidermidis (strain ATCC 35984 / DSM 28319 / BCRC 17069 / CCUG 31568 / BM 3577 / RP62A) protein is DEAD-box ATP-dependent RNA helicase CshA.